A 209-amino-acid polypeptide reads, in one-letter code: Protease (209 aa).

Catalysis depends on residues H55, D72, and C123.

It belongs to the peptidase C5 family. As to quaternary structure, interacts with protease cofactor pVI-C; this interaction is necessary for protease activation.

It is found in the virion. It localises to the host nucleus. The enzyme catalyses Cleaves proteins of the adenovirus and its host cell at two consensus sites: -Yaa-Xaa-Gly-Gly-|-Xaa- and -Yaa-Xaa-Gly-Xaa-|-Gly- (in which Yaa is Met, Ile or Leu, and Xaa is any amino acid).. With respect to regulation, requires DNA and protease cofactor for maximal activation. Inside nascent virions, becomes partially activated by binding to the viral DNA, allowing it to cleave the cofactor that binds to the protease and fully activates it. Actin, like the viral protease cofactor, seems to act as a cofactor in the cleavage of cytokeratin 18 and of actin itself. Functionally, cleaves viral precursor proteins (pTP, pIIIa, pVI, pVII, pVIII, and pX) inside newly assembled particles giving rise to mature virions. Protease complexed to its cofactor slides along the viral DNA to specifically locate and cleave the viral precursors. Mature virions have a weakened organization compared to the unmature virions, thereby facilitating subsequent uncoating. Without maturation, the particle lacks infectivity and is unable to uncoat. Late in adenovirus infection, in the cytoplasm, may participate in the cytoskeleton destruction. Cleaves host cell cytoskeletal keratins K7 and K18. This chain is Protease, found in Human adenovirus D serotype 17 (HAdV-17).